The chain runs to 432 residues: Enolase (432 aa).

Glutamine 168 serves as a coordination point for (2R)-2-phosphoglycerate. Glutamate 210 acts as the Proton donor in catalysis. 3 residues coordinate Mg(2+): aspartate 247, glutamate 288, and aspartate 315. 4 residues coordinate (2R)-2-phosphoglycerate: lysine 340, arginine 369, serine 370, and lysine 391. The active-site Proton acceptor is lysine 340.

This sequence belongs to the enolase family. It depends on Mg(2+) as a cofactor.

It is found in the cytoplasm. Its subcellular location is the secreted. The protein resides in the cell surface. It catalyses the reaction (2R)-2-phosphoglycerate = phosphoenolpyruvate + H2O. Its pathway is carbohydrate degradation; glycolysis; pyruvate from D-glyceraldehyde 3-phosphate: step 4/5. Its function is as follows. Catalyzes the reversible conversion of 2-phosphoglycerate (2-PG) into phosphoenolpyruvate (PEP). It is essential for the degradation of carbohydrates via glycolysis. This is Enolase from Microcystis aeruginosa (strain NIES-843 / IAM M-2473).